A 188-amino-acid polypeptide reads, in one-letter code: Type II secretion system protein H (188 aa).

A propeptide spans 1–10 (MKRSTRKQQG) (leader sequence). An N-methylphenylalanine modification is found at F11. The chain crosses the membrane as a helical span at residues 13-35 (LLEMMLVVLLAGIAAGMVVMAFP).

This sequence belongs to the GSP H family. In terms of assembly, type II secretion is composed of four main components: the outer membrane complex, the inner membrane complex, the cytoplasmic secretion ATPase and the periplasm-spanning pseudopilus. Interacts with core component OutG. Cleaved by prepilin peptidase. In terms of processing, methylated by prepilin peptidase at the amino group of the N-terminal phenylalanine once the leader sequence is cleaved by prepilin peptidase.

Its subcellular location is the cell inner membrane. In terms of biological role, component of the type II secretion system required for the energy-dependent secretion of extracellular factors such as proteases and toxins from the periplasm. Part of the pseudopilus tip complex that is critical for the recognition and binding of secretion substrates. This chain is Type II secretion system protein H (outH), found in Pectobacterium carotovorum subsp. carotovorum (Erwinia carotovora subsp. carotovora).